A 248-amino-acid polypeptide reads, in one-letter code: 2-C-methyl-D-erythritol 4-phosphate cytidylyltransferase (248 aa).

This sequence belongs to the IspD/TarI cytidylyltransferase family. IspD subfamily.

It catalyses the reaction 2-C-methyl-D-erythritol 4-phosphate + CTP + H(+) = 4-CDP-2-C-methyl-D-erythritol + diphosphate. The protein operates within isoprenoid biosynthesis; isopentenyl diphosphate biosynthesis via DXP pathway; isopentenyl diphosphate from 1-deoxy-D-xylulose 5-phosphate: step 2/6. Functionally, catalyzes the formation of 4-diphosphocytidyl-2-C-methyl-D-erythritol from CTP and 2-C-methyl-D-erythritol 4-phosphate (MEP). This Corynebacterium efficiens (strain DSM 44549 / YS-314 / AJ 12310 / JCM 11189 / NBRC 100395) protein is 2-C-methyl-D-erythritol 4-phosphate cytidylyltransferase.